We begin with the raw amino-acid sequence, 117 residues long: MSWRGRSTYYWPRPRRYVQPPEMIGPMRPEQFSDEVEPATPEEGEPATQRQDPAAAQEGEDEGASAGQGPKPEADSQEQGHPQTGCECEDGPDGQEMDPPNPEEVKTPEEGEKQSQC.

The interval 1–117 (MSWRGRSTYY…PEEGEKQSQC (117 aa)) is disordered. Acidic residues-rich tracts occupy residues 32-45 (FSDEVEPATPEEGE) and 87-96 (ECEDGPDGQE). Residues 103–117 (EEVKTPEEGEKQSQC) show a composition bias toward basic and acidic residues.

It belongs to the GAGE family. In terms of tissue distribution, expressed in a variety of tumor tissues but not in normal tissues, except testis.

Its function is as follows. Antigen, recognized on melanoma by autologous cytolytic T-lymphocytes. This is G antigen 4 from Homo sapiens (Human).